We begin with the raw amino-acid sequence, 147 residues long: Flagellar assembly factor FliW (147 aa).

This sequence belongs to the FliW family. As to quaternary structure, interacts with translational regulator CsrA and flagellin(s).

The protein localises to the cytoplasm. Functionally, acts as an anti-CsrA protein, binds CsrA and prevents it from repressing translation of its target genes, one of which is flagellin. Binds to flagellin and participates in the assembly of the flagellum. In Treponema denticola (strain ATCC 35405 / DSM 14222 / CIP 103919 / JCM 8153 / KCTC 15104), this protein is Flagellar assembly factor FliW.